The primary structure comprises 573 residues: Proline--tRNA ligase (573 aa).

It belongs to the class-II aminoacyl-tRNA synthetase family. ProS type 1 subfamily. In terms of assembly, homodimer.

The protein resides in the cytoplasm. The enzyme catalyses tRNA(Pro) + L-proline + ATP = L-prolyl-tRNA(Pro) + AMP + diphosphate. Functionally, catalyzes the attachment of proline to tRNA(Pro) in a two-step reaction: proline is first activated by ATP to form Pro-AMP and then transferred to the acceptor end of tRNA(Pro). As ProRS can inadvertently accommodate and process non-cognate amino acids such as alanine and cysteine, to avoid such errors it has two additional distinct editing activities against alanine. One activity is designated as 'pretransfer' editing and involves the tRNA(Pro)-independent hydrolysis of activated Ala-AMP. The other activity is designated 'posttransfer' editing and involves deacylation of mischarged Ala-tRNA(Pro). The misacylated Cys-tRNA(Pro) is not edited by ProRS. The chain is Proline--tRNA ligase from Methylobacillus flagellatus (strain ATCC 51484 / DSM 6875 / VKM B-1610 / KT).